A 596-amino-acid chain; its full sequence is DNA primase (596 aa).

The CHC2-type zinc-finger motif lies at 41–65 (CPFHHEKTPSFSVSQDKQIYKCFGC). In terms of domain architecture, Toprim spans 255–336 (DTIIIVEGYM…DIKIIKIPDG (82 aa)). Residues Glu261, Asp305, and Asp307 each coordinate Mg(2+).

Belongs to the DnaG primase family. Monomer. Interacts with DnaB. Requires Zn(2+) as cofactor. Mg(2+) serves as cofactor.

It carries out the reaction ssDNA + n NTP = ssDNA/pppN(pN)n-1 hybrid + (n-1) diphosphate.. Functionally, RNA polymerase that catalyzes the synthesis of short RNA molecules used as primers for DNA polymerase during DNA replication. This Clostridium acetobutylicum (strain ATCC 824 / DSM 792 / JCM 1419 / IAM 19013 / LMG 5710 / NBRC 13948 / NRRL B-527 / VKM B-1787 / 2291 / W) protein is DNA primase.